We begin with the raw amino-acid sequence, 617 residues long: Melatonin-related receptor (617 aa).

Residues 1 to 30 (MGPTLAVPTPYGCIGCKLPQPEYPPALIIF) are Extracellular-facing. A helical transmembrane segment spans residues 31–51 (MFCAMVITIVVDLIGNSMVIL). Residues 52–64 (AVTKNKKLRNSGN) lie on the Cytoplasmic side of the membrane. The chain crosses the membrane as a helical span at residues 65–85 (IFVVSLSVADMLVAIYPYPLM). The Extracellular portion of the chain corresponds to 86–103 (LHAMSIGGWDLSQLQCQM). C101 and C178 are oxidised to a cystine. The chain crosses the membrane as a helical span at residues 104 to 124 (VGFITGLSVVGSIFNIVAIAI). Residues 125-143 (NRYCYICHSLQYERIFSVR) lie on the Cytoplasmic side of the membrane. Residues 144-164 (NTCIYLVITWIMTVLAVLPNM) form a helical membrane-spanning segment. The Extracellular portion of the chain corresponds to 165–188 (YIGTIEYDPRTYTCIFNYLNNPVF). The helical transmembrane segment at 189–209 (TVTIVCIHFVLPLLIVGFCYV) threads the bilayer. Topologically, residues 210–239 (RIWTKVLAARDPAGQNPDNQLAEVRNFLTM) are cytoplasmic. The helical transmembrane segment at 240-260 (FVIFLLFAVCWCPINVLTVLV) threads the bilayer. At 261–273 (AVSPKEMAGKIPN) the chain is on the extracellular side. The chain crosses the membrane as a helical span at residues 274 to 294 (WLYLAAYFIAYFNSCLNAVIY). Topologically, residues 295–617 (GLLNENFRRE…VEDDPDEMAV (323 aa)) are cytoplasmic. 2 disordered regions span residues 340–438 (AHAR…ATVY) and 464–596 (SVHF…VTTS). Over residues 341–353 (HARDQAREQDRAH) the composition is skewed to basic and acidic residues. The span at 485–500 (GSHSKSAFSAATSHPK) shows a compositional bias: polar residues.

This sequence belongs to the G-protein coupled receptor 1 family. As to quaternary structure, homodimer, and heterodimer with MTNR1A and MTNR1B. Interacts with KAT5. Interacts with RTN4 isoform A/NOGO-A. Interacts with TGFBR1. In terms of assembly, interacts with GTF2I. Cleaved by CAPN1 in a calcium-dependent manner. As to expression, hypothalamus and pituitary.

Its subcellular location is the cell membrane. It is found in the postsynaptic density. The protein localises to the nucleus. Its function is as follows. G protein-coupled receptor that plays a role in numerous physiological processes including regulation of energy metabolism, neurite outgrowth or cell migration. Promotes self-renewal and neuronal differentiation of neural progenitor cells through activation of the NOTCH and WNT/beta-catenin signaling pathways. Modulates the KAT5-dependent glucocorticoid receptor signaling by modulating KAT5 subcellular compartmentalisation. Also plays a role in the activation TGFBR1 in the absence of TGFBR2 by interfering with FKBP1A binding to TGFBR1, leading to induction of both canonical and non-canonical SMAD signaling pathways resulting in inhibition of proliferation or promotion of migration. In terms of biological role, upon cleavage by CAPN1, functions as a scaffold in the nucleus for interacting partners such as GTF2I to promote FOS promoter activation. This is Melatonin-related receptor (GPR50) from Homo sapiens (Human).